Consider the following 316-residue polypeptide: GTP cyclohydrolase FolE2 2 (316 aa).

It belongs to the GTP cyclohydrolase IV family.

The enzyme catalyses GTP + H2O = 7,8-dihydroneopterin 3'-triphosphate + formate + H(+). It functions in the pathway cofactor biosynthesis; 7,8-dihydroneopterin triphosphate biosynthesis; 7,8-dihydroneopterin triphosphate from GTP: step 1/1. In terms of biological role, converts GTP to 7,8-dihydroneopterin triphosphate. The protein is GTP cyclohydrolase FolE2 2 of Burkholderia orbicola (strain MC0-3).